Consider the following 256-residue polypeptide: Protein YIPF5 (256 aa).

The Cytoplasmic segment spans residues 1-125; it reads MSNFDNFNTD…ADGNIMNETD (125 aa). The chain crosses the membrane as a helical span at residues 126–146; sequence LAGPMVFCLAFGATLLLAGKI. Residue Q147 is a topological domain, lumenal. A helical transmembrane segment spans residues 148–168; it reads FGYVYGISAIGCLGMYCLLNL. Residues 169–172 are Cytoplasmic-facing; that stretch reads MSMT. The chain crosses the membrane as a helical span at residues 173-193; that stretch reads GVSFGCVSSVLGYCLLPMIIL. Over 194–195 the chain is Lumenal; that stretch reads SS. A helical transmembrane segment spans residues 196–216; it reads FAVIFSLQGILGIVLAALIIG. Over 217-235 the chain is Cytoplasmic; sequence WCSFSASKIFISALAMDGQ. The chain crosses the membrane as a helical span at residues 236–256; sequence QVLVAYPCALLYGVFALISVF.

Belongs to the YIP1 family.

The protein localises to the endoplasmic reticulum membrane. It localises to the golgi apparatus. Its subcellular location is the cis-Golgi network membrane. Its function is as follows. Plays a role in transport between endoplasmic reticulum and Golgi. This is Protein YIPF5 (yipf5) from Xenopus tropicalis (Western clawed frog).